A 428-amino-acid polypeptide reads, in one-letter code: 3-oxo-tetronate kinase (428 aa).

Residues serine 267, 365-368 (GGET), and glycine 409 contribute to the ATP site.

Belongs to the four-carbon acid sugar kinase family.

The enzyme catalyses 3-dehydro-L-erythronate + ATP = 3-dehydro-4-O-phospho-L-erythronate + ADP + H(+). It catalyses the reaction 3-dehydro-D-erythronate + ATP = 3-dehydro-4-O-phospho-D-erythronate + ADP + H(+). In terms of biological role, catalyzes the ATP-dependent phosphorylation of 3-oxo-tetronate to 3-oxo-tetronate 4-phosphate. This chain is 3-oxo-tetronate kinase, found in Burkholderia multivorans (strain ATCC 17616 / 249).